The primary structure comprises 251 residues: Imidazole glycerol phosphate synthase subunit HisF (251 aa).

Residues Asp11 and Asp130 contribute to the active site.

Belongs to the HisA/HisF family. Heterodimer of HisH and HisF.

Its subcellular location is the cytoplasm. The catalysed reaction is 5-[(5-phospho-1-deoxy-D-ribulos-1-ylimino)methylamino]-1-(5-phospho-beta-D-ribosyl)imidazole-4-carboxamide + L-glutamine = D-erythro-1-(imidazol-4-yl)glycerol 3-phosphate + 5-amino-1-(5-phospho-beta-D-ribosyl)imidazole-4-carboxamide + L-glutamate + H(+). Its pathway is amino-acid biosynthesis; L-histidine biosynthesis; L-histidine from 5-phospho-alpha-D-ribose 1-diphosphate: step 5/9. Functionally, IGPS catalyzes the conversion of PRFAR and glutamine to IGP, AICAR and glutamate. The HisF subunit catalyzes the cyclization activity that produces IGP and AICAR from PRFAR using the ammonia provided by the HisH subunit. This Chlorobium phaeovibrioides (strain DSM 265 / 1930) (Prosthecochloris vibrioformis (strain DSM 265)) protein is Imidazole glycerol phosphate synthase subunit HisF.